The following is a 498-amino-acid chain: ATP synthase subunit beta, chloroplastic (498 aa).

172-179 is a binding site for ATP; that stretch reads GGAGVGKT.

It belongs to the ATPase alpha/beta chains family. In terms of assembly, F-type ATPases have 2 components, CF(1) - the catalytic core - and CF(0) - the membrane proton channel. CF(1) has five subunits: alpha(3), beta(3), gamma(1), delta(1), epsilon(1). CF(0) has four main subunits: a(1), b(1), b'(1) and c(9-12).

The protein localises to the plastid. It is found in the chloroplast thylakoid membrane. The catalysed reaction is ATP + H2O + 4 H(+)(in) = ADP + phosphate + 5 H(+)(out). Functionally, produces ATP from ADP in the presence of a proton gradient across the membrane. The catalytic sites are hosted primarily by the beta subunits. In Phalaenopsis aphrodite subsp. formosana (Moth orchid), this protein is ATP synthase subunit beta, chloroplastic.